Reading from the N-terminus, the 427-residue chain is Proline--tRNA ligase (427 aa).

Belongs to the class-II aminoacyl-tRNA synthetase family. ProS type 2 subfamily. Homodimer.

It localises to the cytoplasm. The catalysed reaction is tRNA(Pro) + L-proline + ATP = L-prolyl-tRNA(Pro) + AMP + diphosphate. In terms of biological role, catalyzes the attachment of proline to tRNA(Pro) in a two-step reaction: proline is first activated by ATP to form Pro-AMP and then transferred to the acceptor end of tRNA(Pro). The polypeptide is Proline--tRNA ligase (Rickettsia akari (strain Hartford)).